A 241-amino-acid chain; its full sequence is Thymidylate kinase (241 aa).

17–24 (GGEGAGKT) provides a ligand contact to ATP.

It belongs to the thymidylate kinase family.

The enzyme catalyses dTMP + ATP = dTDP + ADP. Functionally, phosphorylation of dTMP to form dTDP in both de novo and salvage pathways of dTTP synthesis. This chain is Thymidylate kinase, found in Thermosynechococcus vestitus (strain NIES-2133 / IAM M-273 / BP-1).